The following is a 109-amino-acid chain: Oncomodulin (109 aa).

Position 2 is an N-acetylserine (serine 2). EF-hand domains lie at 39 to 74 (MSAS…FQSD) and 78 to 109 (LTES…MVHS). Aspartate 52, aspartate 54, serine 56, tyrosine 58, glutamate 63, aspartate 91, aspartate 93, aspartate 95, lysine 97, and glutamate 102 together coordinate Ca(2+).

The protein belongs to the parvalbumin family. Found in tumor tissues and not detected in normal tissues.

In terms of biological role, has some calmodulin-like activity with respect to enzyme activation and growth regulation. Binds two calcium ions. This Rattus norvegicus (Rat) protein is Oncomodulin (Ocm).